Reading from the N-terminus, the 101-residue chain is Apolipoprotein C-II (101 aa).

The signal sequence occupies residues 1–22; it reads MGIRYLLVLVLVLLVLGCEVQG. The segment at 66 to 74 is lipid binding; it reads TVDEKIREI. The interval 78 to 101 is lipoprotein lipase cofactor; the sequence is STAAVSTYAGIFTDQLLSMLKGDQ.

The protein belongs to the apolipoprotein C2 family. In terms of processing, proapolipoprotein C-II is synthesized as a sialic acid containing glycoprotein which is subsequently desialylated prior to its proteolytic processing. Post-translationally, proapolipoprotein C-II, the major form found in plasma undergoes proteolytic cleavage of its N-terminal hexapeptide to generate apolipoprotein C-II, which occurs as the minor form in plasma.

The protein localises to the secreted. Component of chylomicrons, very low-density lipoproteins (VLDL), low-density lipoproteins (LDL), and high-density lipoproteins (HDL) in plasma. Plays an important role in lipoprotein metabolism as an activator of lipoprotein lipase. Both proapolipoprotein C-II and apolipoprotein C-II can activate lipoprotein lipase. The polypeptide is Apolipoprotein C-II (APOC2) (Mirounga angustirostris (Northern elephant seal)).